A 434-amino-acid chain; its full sequence is UDP-N-acetylglucosamine 1-carboxyvinyltransferase (434 aa).

Phosphoenolpyruvate is bound at residue 34–35; the sequence is KN. R104 contributes to the UDP-N-acetyl-alpha-D-glucosamine binding site. The Proton donor role is filled by C128. Residue C128 is modified to 2-(S-cysteinyl)pyruvic acid O-phosphothioketal. Residues D319 and I341 each contribute to the UDP-N-acetyl-alpha-D-glucosamine site.

Belongs to the EPSP synthase family. MurA subfamily.

It localises to the cytoplasm. The catalysed reaction is phosphoenolpyruvate + UDP-N-acetyl-alpha-D-glucosamine = UDP-N-acetyl-3-O-(1-carboxyvinyl)-alpha-D-glucosamine + phosphate. It functions in the pathway cell wall biogenesis; peptidoglycan biosynthesis. In terms of biological role, cell wall formation. Adds enolpyruvyl to UDP-N-acetylglucosamine. This Prochlorococcus marinus (strain MIT 9313) protein is UDP-N-acetylglucosamine 1-carboxyvinyltransferase.